The primary structure comprises 225 residues: MAEGETKSPGPKKCGPYISSVTSQSVNLMIRGVVLFFIGVFLALVLNLLQIQRNVTLFPPDVIASIFSSAWWVPPCCGTASAVIGLLYPCIDRHLGEPHKFKREWSSVMRCVAVFVGINHASAKVDFDNNIQLSLTLAALSIGLWWTFDRSRSGFGLGVGIAFLATLVTQLLVYNGVYQYTSPDFLYVRSWLPCIFFAGGITMGNIGRQLAMYECKVIAEKSHQE.

Residues Met1–Leu28 lie on the Cytoplasmic side of the membrane. The helical transmembrane segment at Met29–Ile51 threads the bilayer. The Lumenal segment spans residues Gln52–Ala70. The helical transmembrane segment at Trp71–Tyr88 threads the bilayer. At Pro89 to Arg103 the chain is on the cytoplasmic side. The chain crosses the membrane as a helical span at residues Glu104–Asp126. Over Phe127 to Asn129 the chain is Lumenal. The chain crosses the membrane as a helical span at residues Asn130–Phe148. Residues Asp149 to Ser153 lie on the Cytoplasmic side of the membrane. A Phosphoserine modification is found at Ser151. Residues Gly154–Asn175 form a helical membrane-spanning segment. Residues Gly176–Arg189 lie on the Lumenal side of the membrane. Residues Ser190–Gly207 form a helical membrane-spanning segment. The Cytoplasmic segment spans residues Arg208–Glu225. Cys215 bears the Cysteine sulfenic acid (-SOH); alternate mark. Cys215 is covalently cross-linked (Glycyl cysteine thioester (Cys-Gly) (interchain with G-Cter in ubiquitin); alternate). A KxHxx motif is present at residues Ala219–Glu225.

This sequence belongs to the INSIG family. Interacts with SCAP; interaction is direct and only takes place in the presence of sterols; it prevents interaction between SCAP and the coat protein complex II (COPII). Associates with the SCAP-SREBP complex (composed of SCAP and SREBF1/SREBP1 or SREBF2/SREBP2); association is mediated via its interaction with SCAP and only takes place in the presence of sterols. Interacts with RNF139. Interacts with RNF145. Phosphorylation at Ser-151 by PCK1 reduces binding to oxysterol, disrupting the interaction between INSIG2 and SCAP, thereby promoting nuclear translocation of SREBP proteins (SREBF1/SREBP1 or SREBF2/SREBP2) and subsequent transcription of downstream lipogenesis-related genes. In terms of processing, polyubiquitinated by AMFR/gp78 at Cys-215 in some tissues such as adipose tissues, undifferentiated myoblasts and liver, leading to its degradation. In differentiated myotubes, Cys-215 oxidation prevents ubiquitination at the same site, resulting in protein stabilization. Post-translationally, oxidized at Cys-215 in differentiated myotubes, preventing ubiquitination at the same site, and resulting in protein stabilization.

The protein localises to the endoplasmic reticulum membrane. Functionally, oxysterol-binding protein that mediates feedback control of cholesterol synthesis by controlling both endoplasmic reticulum to Golgi transport of SCAP and degradation of HMGCR. Acts as a negative regulator of cholesterol biosynthesis by mediating the retention of the SCAP-SREBP complex in the endoplasmic reticulum, thereby blocking the processing of sterol regulatory element-binding proteins (SREBPs) SREBF1/SREBP1 and SREBF2/SREBP2. Binds oxysterol, including 22-hydroxycholesterol, 24-hydroxycholesterol, 25-hydroxycholesterol and 27-hydroxycholesterol, regulating interaction with SCAP and retention of the SCAP-SREBP complex in the endoplasmic reticulum. In presence of oxysterol, interacts with SCAP, retaining the SCAP-SREBP complex in the endoplasmic reticulum, thereby preventing SCAP from escorting SREBF1/SREBP1 and SREBF2/SREBP2 to the Golgi. Sterol deprivation or phosphorylation by PCK1 reduce oxysterol-binding, disrupting the interaction between INSIG2 and SCAP, thereby promoting Golgi transport of the SCAP-SREBP complex, followed by processing and nuclear translocation of SREBF1/SREBP1 and SREBF2/SREBP2. Also regulates cholesterol synthesis by regulating degradation of HMGCR: initiates the sterol-mediated ubiquitin-mediated endoplasmic reticulum-associated degradation (ERAD) of HMGCR via recruitment of the reductase to the ubiquitin ligase RNF139. This is Insulin-induced gene 2 protein from Sus scrofa (Pig).